The primary structure comprises 236 residues: 2,3,4,5-tetrahydropyridine-2,6-dicarboxylate N-acetyltransferase (236 aa).

The protein belongs to the transferase hexapeptide repeat family. DapH subfamily.

The enzyme catalyses (S)-2,3,4,5-tetrahydrodipicolinate + acetyl-CoA + H2O = L-2-acetamido-6-oxoheptanedioate + CoA. It functions in the pathway amino-acid biosynthesis; L-lysine biosynthesis via DAP pathway; LL-2,6-diaminopimelate from (S)-tetrahydrodipicolinate (acetylase route): step 1/3. In terms of biological role, catalyzes the transfer of an acetyl group from acetyl-CoA to tetrahydrodipicolinate. This Bacillus velezensis (strain DSM 23117 / BGSC 10A6 / LMG 26770 / FZB42) (Bacillus amyloliquefaciens subsp. plantarum) protein is 2,3,4,5-tetrahydropyridine-2,6-dicarboxylate N-acetyltransferase.